Here is an 853-residue protein sequence, read N- to C-terminus: Aminotransferase PigE (853 aa).

503–504 (GT) is a binding site for pyridoxal 5'-phosphate. Lys645 is subject to N6-(pyridoxal phosphate)lysine. Thr680 is a binding site for pyridoxal 5'-phosphate.

It belongs to the class-III pyridoxal-phosphate-dependent aminotransferase family. In terms of assembly, homodimer. Pyridoxal 5'-phosphate is required as a cofactor.

It participates in antibiotic biosynthesis; prodigiosin biosynthesis. Functionally, involved in the biosynthesis of 2-methyl-3-n-amyl-pyrrole (MAP), one of the terminal products involved in the biosynthesis of the red antibiotic prodigiosin (Pig). Catalyzes the transamination to the aldehyde group of 3-acetyloctanal, resulting in an aminoketone, which spontaneously cyclizes to yield the dihydro form of MAP (H2MAP). The protein is Aminotransferase PigE of Serratia sp. (strain FS14).